Reading from the N-terminus, the 636-residue chain is Fructose-1,6-bisphosphatase class 3 (636 aa).

The protein belongs to the FBPase class 3 family. Mn(2+) is required as a cofactor.

It carries out the reaction beta-D-fructose 1,6-bisphosphate + H2O = beta-D-fructose 6-phosphate + phosphate. Its pathway is carbohydrate biosynthesis; gluconeogenesis. The sequence is that of Fructose-1,6-bisphosphatase class 3 from Streptococcus sanguinis (strain SK36).